We begin with the raw amino-acid sequence, 720 residues long: Phosphoribosylformylglycinamidine synthase subunit PurL (720 aa).

The active site involves His-34. An ATP-binding site is contributed by Tyr-37. Residue Glu-83 coordinates Mg(2+). Residues 84–87 (SHNH) and Arg-106 contribute to the substrate site. The active-site Proton acceptor is the His-85. Asp-107 provides a ligand contact to Mg(2+). A substrate-binding site is contributed by Gln-231. Residue Asp-259 participates in Mg(2+) binding. 303 to 305 (ESQ) contacts substrate. ATP is bound by residues Asp-480 and Gly-517. Asn-518 is a binding site for Mg(2+). Ser-520 contacts substrate.

The protein belongs to the FGAMS family. As to quaternary structure, monomer. Part of the FGAM synthase complex composed of 1 PurL, 1 PurQ and 2 PurS subunits.

It localises to the cytoplasm. It carries out the reaction N(2)-formyl-N(1)-(5-phospho-beta-D-ribosyl)glycinamide + L-glutamine + ATP + H2O = 2-formamido-N(1)-(5-O-phospho-beta-D-ribosyl)acetamidine + L-glutamate + ADP + phosphate + H(+). It functions in the pathway purine metabolism; IMP biosynthesis via de novo pathway; 5-amino-1-(5-phospho-D-ribosyl)imidazole from N(2)-formyl-N(1)-(5-phospho-D-ribosyl)glycinamide: step 1/2. Part of the phosphoribosylformylglycinamidine synthase complex involved in the purines biosynthetic pathway. Catalyzes the ATP-dependent conversion of formylglycinamide ribonucleotide (FGAR) and glutamine to yield formylglycinamidine ribonucleotide (FGAM) and glutamate. The FGAM synthase complex is composed of three subunits. PurQ produces an ammonia molecule by converting glutamine to glutamate. PurL transfers the ammonia molecule to FGAR to form FGAM in an ATP-dependent manner. PurS interacts with PurQ and PurL and is thought to assist in the transfer of the ammonia molecule from PurQ to PurL. In Haloarcula marismortui (strain ATCC 43049 / DSM 3752 / JCM 8966 / VKM B-1809) (Halobacterium marismortui), this protein is Phosphoribosylformylglycinamidine synthase subunit PurL.